Here is a 1172-residue protein sequence, read N- to C-terminus: Ras guanine nucleotide exchange factor W (1172 aa).

Low complexity-rich tracts occupy residues 34–70 (PIYT…LNNL) and 78–87 (NSNSVNNTIS). 3 disordered regions span residues 34–100 (PIYT…RSNT), 138–162 (KFLD…RIQQ), and 186–246 (FKRS…EIKD). Over residues 194 to 241 (QPPQSQSQQQQQLQLQQQQQQSMPNLSLGNNINSNNNNNNGSENNDIS) the composition is skewed to low complexity. The next 6 helical transmembrane spans lie at 286–306 (IWLT…DIIG), 320–340 (IMAV…LNLF), 347–367 (FPGT…VTDI), 378–400 (VLSI…ISLI), 432–452 (LTTN…QLLV), and 545–565 (ILHL…NLLI). Residues 666–702 (LLGMLNEIDDSLQAAKEKVEEESIQNSILKKDIEDLY) adopt a coiled-coil conformation. The N-terminal Ras-GEF domain maps to 765–903 (DLNVIQYATI…YIDSIHKRKM (139 aa)). The region spanning 938 to 1170 (DISDIAIQIT…WKMSLSCEQR (233 aa)) is the Ras-GEF domain.

It localises to the membrane. Promotes the exchange of Ras-bound GDP by GTP. The protein is Ras guanine nucleotide exchange factor W (gefW) of Dictyostelium discoideum (Social amoeba).